The chain runs to 32 residues: Photosystem II reaction center protein Z (32 aa).

Residues 9 to 31 (FILLGAVTWAILVFIVGSLNSYV) traverse the membrane as a helical segment.

The protein belongs to the PsbZ family. In terms of assembly, PSII is composed of 1 copy each of membrane proteins PsbA, PsbB, PsbC, PsbD, PsbE, PsbF, PsbH, PsbI, PsbJ, PsbK, PsbL, PsbM, PsbT, PsbY, PsbZ, Psb30/Ycf12, at least 3 peripheral proteins of the oxygen-evolving complex and a large number of cofactors. It forms dimeric complexes.

The protein resides in the plastid. It is found in the chloroplast thylakoid membrane. Functionally, may control the interaction of photosystem II (PSII) cores with the light-harvesting antenna, regulates electron flow through the 2 photosystem reaction centers. PSII is a light-driven water plastoquinone oxidoreductase, using light energy to abstract electrons from H(2)O, generating a proton gradient subsequently used for ATP formation. The chain is Photosystem II reaction center protein Z from Euglena stellata.